The sequence spans 260 residues: Large ribosomal subunit protein uL2y (260 aa).

The interval 227–248 is disordered; the sequence is RRDKSAGAKVGQIAARRTGRRR.

It belongs to the universal ribosomal protein uL2 family.

The sequence is that of Large ribosomal subunit protein uL2y (RPL8B) from Arabidopsis thaliana (Mouse-ear cress).